The primary structure comprises 533 residues: Leucine-rich glioma-inactivated protein 1 (533 aa).

The signal sequence occupies residues 1–34; that stretch reads MESERSQRMGNACIPLKRIAYCLCLLSALLLTEG. Residues 35 to 72 enclose the LRRNT domain; sequence KKPAKPKCPAVCTCTKDNALCENARSIPRTVPPDVISL. LRR repeat units lie at residues 92–113 and 116–137; these read HLEYLFIENNNIKSISRHTFRG and SLIHLSLANNNLQTLPKDIFKG. Residues 149–199 form the LRRCT domain; it reads NSFNCDCKLKWLVEWLSHTNATVEDIYCEGPPEYKKRKINSLSSKDFDCII. A glycan (N-linked (GlcNAc...) asparagine) is linked at Asn-168. 7 EAR repeats span residues 201 to 243, 247 to 289, 293 to 340, 342 to 391, 395 to 438, 440 to 482, and 486 to 528; these read EFAK…EWDH, TFRN…KRDS, KFIK…KWNG, GFYS…QWNK, LFTN…KWGG, SFQD…NWDA, and KFVK…KHVI. Asn-253 carries N-linked (GlcNAc...) asparagine glycosylation. Asn-398 carries an N-linked (GlcNAc...) asparagine glycan.

In terms of assembly, oligomer. Interacts with KCNA1 within a complex containing KCNA1, KCNA4 and KCNAB1. Part of a complex containing ADAM22, DLG4/PSD95 and CACNG2 (stargazin). Can bind to ADAM11 and ADAM23. Glycosylated.

The protein localises to the secreted. Its subcellular location is the synapse. It is found in the cytoplasm. Its function is as follows. Regulates voltage-gated potassium channels assembled from KCNA1, KCNA4 and KCNAB1. It slows down channel inactivation by precluding channel closure mediated by the KCNAB1 subunit. Ligand for ADAM22 that positively regulates synaptic transmission mediated by AMPA-type glutamate receptors. Plays a role in suppressing the production of MMP1/3 through the phosphatidylinositol 3-kinase/ERK pathway. The sequence is that of Leucine-rich glioma-inactivated protein 1 (LGI1) from Bos taurus (Bovine).